The primary structure comprises 623 residues: Fanconi anemia group G protein homolog (623 aa).

4 TPR repeats span residues 251-284 (VQVY…GTTC), 349-382 (SQAK…LLGG), 458-491 (SATH…LFRT), and 517-550 (VAAL…CPGN).

In terms of assembly, belongs to the multisubunit FA complex composed of FANCA, FANCB, FANCC, FANCE, FANCF, FANCG, FANCL/PHF9 and FANCM. In complex with FANCF, FANCA and FANCL, but not with FANCC, nor FANCE, interacts with HES1; this interaction may be essential for the stability and nuclear localization of FA core complex proteins. The complex with FANCC and FANCG may also include EIF2AK2 and HSP70. Highest expression levels in spleen, thymus and testis.

The protein resides in the nucleus. Functionally, DNA repair protein that may operate in a postreplication repair or a cell cycle checkpoint function. May be implicated in interstrand DNA cross-link repair and in the maintenance of normal chromosome stability. Candidate tumor suppressor gene. This is Fanconi anemia group G protein homolog (Fancg) from Mus musculus (Mouse).